We begin with the raw amino-acid sequence, 314 residues long: Taste receptor type 2 member 42 (314 aa).

Residues 1 to 7 (MATELDK) are Extracellular-facing. A helical membrane pass occupies residues 8–28 (IFLILEIAEFIIGMLGNVFIG). Over 29-50 (LVNCSEGIKNQKVFSADFILTC) the chain is Cytoplasmic. Residues 51 to 71 (LAISTIGQLFVILFDSFLVGL) form a helical membrane-spanning segment. Topologically, residues 72–101 (ASHLYTTYRLGKPVIMLWHMTNHLTTWLAT) are extracellular. A helical membrane pass occupies residues 102–122 (CLSIFYFFKIAHFPHSLFLWL). Residues 123–127 (RWRMN) are Cytoplasmic-facing. The chain crosses the membrane as a helical span at residues 128–148 (GMIVMLLILSLFLLIFNSLVL). Residues 149-187 (EIFIDISLNIIDKSNLTLYLDESKTVYDKLSILKTLLSL) are Extracellular-facing. Asparagine 163 carries an N-linked (GlcNAc...) asparagine glycan. The helical transmembrane segment at 188–208 (TSFIPFSLSLTSLLFLFLSLV) threads the bilayer. Residues 209–238 (RHTRNLKLSSLGSRDSSTEAHRRAMKMVMS) lie on the Cytoplasmic side of the membrane. Residues 239–259 (FLFLFIVHFFSLQVANWIFFM) form a helical membrane-spanning segment. Residues 260-265 (LWNNKY) lie on the Extracellular side of the membrane. Residues 266 to 286 (IKFAMLALNAFPSCHSFILIL) form a helical membrane-spanning segment. Topologically, residues 287 to 314 (GNSKLRQTAVRLLWHLRNYTKTPNPLPL) are cytoplasmic.

This sequence belongs to the G-protein coupled receptor T2R family.

Its subcellular location is the membrane. Receptor that may play a role in the perception of bitterness and is gustducin-linked. May play a role in sensing the chemical composition of the gastrointestinal content. The activity of this receptor may stimulate alpha gustducin, mediate PLC-beta-2 activation and lead to the gating of TRPM5. This Pan troglodytes (Chimpanzee) protein is Taste receptor type 2 member 42 (TAS2R42).